Here is a 746-residue protein sequence, read N- to C-terminus: NAD(P)H-quinone oxidoreductase subunit 5, chloroplastic (746 aa).

Helical transmembrane passes span 9–29 (WIIPFIPLPVPILLGVGLLLF), 40–60 (WTFLSIFLLSIVMIFSLYLSI), 89–109 (IDPLTSIMLILITTVGILVLI), 125–145 (FAYMGFFNTSMLGLVTSSNLI), 147–167 (VYFFWELVGMCSYLLIGFWFT), 185–205 (GDFGLLLGILGLYWITGSFEF), 221–241 (VNLLFFTLCAFLLFVGPIAKS), 258–278 (TPISALIHAATMVAAGIFLVA), 280–300 (LLPIFIVIPSIMYIISLIGII), 327–347 (LGYMMLALGMGSYRAALFHLI), 354–374 (ALLFLGSGSIIHSMEAIVGYS), 396–416 (TAFLVGTLSLCGIPPLACFWS), 425–445 (FLFSPIFAIIACSTAGLTAFY), 547–567 (ILFPMLLLLLFTLFVGAIGIP), 608–628 (FSVSIALFGIFIAYCLYKPFY), and 723–743 (YLFLYLSYVLIFLTILFFFYF).

Belongs to the complex I subunit 5 family. NDH is composed of at least 16 different subunits, 5 of which are encoded in the nucleus.

Its subcellular location is the plastid. It is found in the chloroplast thylakoid membrane. It carries out the reaction a plastoquinone + NADH + (n+1) H(+)(in) = a plastoquinol + NAD(+) + n H(+)(out). The catalysed reaction is a plastoquinone + NADPH + (n+1) H(+)(in) = a plastoquinol + NADP(+) + n H(+)(out). NDH shuttles electrons from NAD(P)H:plastoquinone, via FMN and iron-sulfur (Fe-S) centers, to quinones in the photosynthetic chain and possibly in a chloroplast respiratory chain. The immediate electron acceptor for the enzyme in this species is believed to be plastoquinone. Couples the redox reaction to proton translocation, and thus conserves the redox energy in a proton gradient. In Lobularia maritima (Sweet alyssum), this protein is NAD(P)H-quinone oxidoreductase subunit 5, chloroplastic (ndhF).